Here is a 460-residue protein sequence, read N- to C-terminus: NADH-quinone oxidoreductase subunit N (460 aa).

13 consecutive transmembrane segments (helical) span residues leucine 2–leucine 22, isoleucine 28–serine 48, alanine 65–tyrosine 85, isoleucine 104–phenylalanine 124, phenylalanine 155–phenylalanine 175, leucine 196–alanine 216, proline 230–leucine 250, isoleucine 263–alanine 283, leucine 292–threonine 312, leucine 321–leucine 341, isoleucine 363–phenylalanine 383, leucine 400–isoleucine 420, and tyrosine 438–isoleucine 458.

The protein belongs to the complex I subunit 2 family. NDH-1 is composed of 14 different subunits. Subunits NuoA, H, J, K, L, M, N constitute the membrane sector of the complex.

The protein resides in the cell inner membrane. The enzyme catalyses a quinone + NADH + 5 H(+)(in) = a quinol + NAD(+) + 4 H(+)(out). Functionally, NDH-1 shuttles electrons from NADH, via FMN and iron-sulfur (Fe-S) centers, to quinones in the respiratory chain. The immediate electron acceptor for the enzyme in this species is believed to be ubiquinone. Couples the redox reaction to proton translocation (for every two electrons transferred, four hydrogen ions are translocated across the cytoplasmic membrane), and thus conserves the redox energy in a proton gradient. This Rickettsia bellii (strain RML369-C) protein is NADH-quinone oxidoreductase subunit N.